The primary structure comprises 178 residues: Protein FAM89A (178 aa).

This sequence belongs to the FAM89 family.

This Bos taurus (Bovine) protein is Protein FAM89A (FAM89A).